Reading from the N-terminus, the 467-residue chain is Cytochrome P450 85A3 (467 aa).

The chain crosses the membrane as a helical span at residues 2 to 22; that stretch reads AIFLIIFVVFFGFCILSTPLF. Position 417 (Cys417) interacts with heme.

Belongs to the cytochrome P450 family. Requires heme as cofactor. Expressed in fruits.

The protein resides in the membrane. The catalysed reaction is 6-deoxocastasterone + reduced [NADPH--hemoprotein reductase] + O2 = 6alpha-hydroxycastasterone + oxidized [NADPH--hemoprotein reductase] + H2O + H(+). It carries out the reaction 6alpha-hydroxycastasterone + reduced [NADPH--hemoprotein reductase] + O2 = castasterone + oxidized [NADPH--hemoprotein reductase] + 2 H2O + H(+). It catalyses the reaction castasterone + reduced [NADPH--hemoprotein reductase] + O2 = brassinolide + oxidized [NADPH--hemoprotein reductase] + H2O + H(+). The enzyme catalyses 6-deoxocastasterone + 2 reduced [NADPH--hemoprotein reductase] + 2 O2 = castasterone + 2 oxidized [NADPH--hemoprotein reductase] + 3 H2O + 2 H(+). It functions in the pathway plant hormone biosynthesis; brassinosteroid biosynthesis. Catalyzes the C6-oxidation step in brassinosteroids biosynthesis. Converts 6-deoxocastasterone (6-deoxoCS) to castasterone (CS), and castasterone (CS) to brassinolide (BL). In Solanum lycopersicum (Tomato), this protein is Cytochrome P450 85A3.